Reading from the N-terminus, the 360-residue chain is Putative F-box protein At3g16210 (360 aa).

The region spanning 1–48 is the F-box domain; that stretch reads MSKFLPEELAIEILVRLSMKDLARFRCVCKTWRDLINDPGFTETYRDM.

This Arabidopsis thaliana (Mouse-ear cress) protein is Putative F-box protein At3g16210.